The primary structure comprises 747 residues: Flowering time control protein FCA (747 aa).

A disordered region spans residues 80–101 (YSVRPTTPPVQQPLSGQKRGYP). RRM domains are found at residues 120 to 201 (VKLF…YADG) and 211 to 291 (FKLF…FAEP). Positions 291-301 (PKRPKPGESRE) are enriched in basic and acidic residues. Residues 291-503 (PKRPKPGESR…QQPLQKMQHP (213 aa)) are disordered. Polar residues-rich tracts occupy residues 320-353 (RPTS…SNTG) and 395-406 (SSSATLQQQNRA). Over residues 448 to 460 (SSQLPTSQLPPQQ) the composition is skewed to low complexity. The segment covering 461-498 (NISRATAPQTPLNINLRPTTVSSATVQFPPRSQQQPLQ) has biased composition (polar residues). The WW domain maps to 591 to 624 (GSVKCTWTEHTSPDGFKYYYNGLTGESKWEKPEE). Over residues 630–641 (REQQKQQQHQEK) the composition is skewed to basic and acidic residues. Disordered stretches follow at residues 630–707 (REQQ…SGIG) and 722–747 (AASM…KNKA). Over residues 642 to 673 (PTIQQSQTQLQPLQQQPQQVQQQYQGQQLQQP) the composition is skewed to low complexity. Composition is skewed to polar residues over residues 674-707 (FYSS…SGIG) and 726-739 (NDIS…QSPQ).

As to quaternary structure, interacts (via C-terminus) with SWI3B and (via WW domain) with FY (via PPLPP motifs). Constitutively expressed, but the negative feedback maintains the active isoform a low level throughout much of the plant, except in meristematic cells at a specific time in development.

Its subcellular location is the nucleus. Its function is as follows. Plays a major role in the promotion of the transition of the vegetative meristem to reproductive development. Plays a role in the regulation of flowering time in the autonomous flowering pathway by decreasing FLOWERING LOCUS C mRNA levels. Required for RNA-mediated chromatin silencing of a range of loci in the genome. Cotranscriptionally recognizes aberrant RNA and marks it for silencing. Controls alternative cleavage and polyadenylation on pre-mRNAs and antisense RNAs. Acts redundantly with FPA to prevent the expression of distally polyadenylated antisense RNAs at the FLC locus. In Arabidopsis thaliana (Mouse-ear cress), this protein is Flowering time control protein FCA (FCA).